We begin with the raw amino-acid sequence, 254 residues long: Low affinity immunoglobulin gamma Fc region receptor III-A (254 aa).

The N-terminal stretch at 1-16 is a signal peptide; it reads MWQLLLPTALLLLVSA. Over 17-208 the chain is Extracellular; it reads GMRAEDLPKA…ISSFFPPGYQ (192 aa). 2 Ig-like C2-type domains span residues 24 to 105 and 107 to 189; these read PKAV…LEVH and GWLL…VNIT. 2 disulfides stabilise this stretch: C47-C89 and C128-C172. N56, N63, and N82 each carry an N-linked (GlcNAc...) asparagine glycan. 2 N-linked (GlcNAc...) asparagine glycosylation sites follow: N180 and N187. A helical membrane pass occupies residues 209-229; the sequence is VSFCLVMVLLFAVDTGLYFSM. Residues 230–254 are Cytoplasmic-facing; that stretch reads KKSIPSSTRDWEDHKFKWSKDPQDK.

In terms of assembly, forms a heterooligomeric complex with ITAM-containing signaling subunits, either a homodimer of CD247, a homodimer of FCER1G or a heterodimer of CD247 and FCER1G. Interacts (via transmembrane domain) with signaling subunits; this interaction is a prerequisite for receptor complex expression on the cell surface and intracellular signal transduction. Binds the Fc region of antigen-complexed IgG with a preference for IgG1 and IgG3 isotypes. Interacts with CD2; this interaction is involved in NK cell activation and cytotoxicity. Interacts with S100A4; this interaction inhibits PKC-dependent phosphorylation of FCGR3A. Glycosylated. Glycosylation plays an inhibitory role in the interaction with IgG1 and IgG2. Post-translationally, undergoes rapid ectodomain shedding upon NK cell stimulation. The soluble form is produced by a proteolytic cleavage mediated by ADAM17. Repeated stimulation causes receptor shedding, a mechanism that allows for increased NK cell motility and detachment from opsonized target cells while avoiding activation-induced NK cell apoptosis. Lymphocytes and monocytes.

It localises to the cell membrane. The protein resides in the secreted. In terms of biological role, receptor for the invariable Fc fragment of immunoglobulin gamma (IgG). Optimally activated upon binding of clustered antigen-IgG complexes displayed on cell surfaces, triggers lysis of antibody-coated cells, a process known as antibody-dependent cellular cytotoxicity (ADCC). Does not bind free monomeric IgG, thus avoiding inappropriate effector cell activation in the absence of antigenic trigger. Mediates IgG effector functions on natural killer (NK) cells. Binds antigen-IgG complexes generated upon infection and triggers NK cell-dependent cytokine production and degranulation to limit viral load and propagation. Involved in the generation of memory-like adaptive NK cells capable to produce high amounts of IFNG and to efficiently eliminate virus-infected cells via ADCC. Regulates NK cell survival and proliferation, in particular by preventing NK cell progenitor apoptosis. Fc-binding subunit that associates with CD247 and/or FCER1G adapters to form functional signaling complexes. Following the engagement of antigen-IgG complexes, triggers phosphorylation of immunoreceptor tyrosine-based activation motif (ITAM)-containing adapters with subsequent activation of phosphatidylinositol 3-kinase signaling and sustained elevation of intracellular calcium that ultimately drive NK cell activation. The ITAM-dependent signaling coupled to receptor phosphorylation by PKC mediates robust intracellular calcium flux that leads to production of pro-inflammatory cytokines, whereas in the absence of receptor phosphorylation it mainly activates phosphatidylinositol 3-kinase signaling leading to cell degranulation. Costimulates NK cells and trigger lysis of target cells independently of IgG binding. Mediates the antitumor activities of therapeutic antibodies. Upon ligation on monocytes triggers TNFA-dependent ADCC of IgG-coated tumor cells. Mediates enhanced ADCC in response to afucosylated IgGs. This chain is Low affinity immunoglobulin gamma Fc region receptor III-A (FCGR3A), found in Macaca fascicularis (Crab-eating macaque).